We begin with the raw amino-acid sequence, 283 residues long: Protein/nucleic acid deglycase HchA (283 aa).

Zn(2+) is bound by residues H86, E91, and H123. Catalysis depends on C185, which acts as the Nucleophile.

Belongs to the peptidase C56 family. HchA subfamily. As to quaternary structure, homodimer.

It is found in the cytoplasm. It catalyses the reaction N(omega)-(1-hydroxy-2-oxopropyl)-L-arginyl-[protein] + H2O = lactate + L-arginyl-[protein] + H(+). The catalysed reaction is N(6)-(1-hydroxy-2-oxopropyl)-L-lysyl-[protein] + H2O = lactate + L-lysyl-[protein] + H(+). The enzyme catalyses S-(1-hydroxy-2-oxopropyl)-L-cysteinyl-[protein] + H2O = lactate + L-cysteinyl-[protein] + H(+). It carries out the reaction N(omega)-(1-hydroxy-2-oxoethyl)-L-arginyl-[protein] + H2O = L-arginyl-[protein] + glycolate + H(+). It catalyses the reaction N(6)-(1-hydroxy-2-oxoethyl)-L-lysyl-[protein] + H2O = glycolate + L-lysyl-[protein] + H(+). The catalysed reaction is S-(1-hydroxy-2-oxoethyl)-L-cysteinyl-[protein] + H2O = glycolate + L-cysteinyl-[protein] + H(+). The enzyme catalyses N(2)-(1-hydroxy-2-oxopropyl)-dGTP + H2O = lactate + dGTP + H(+). It carries out the reaction N(2)-(1-hydroxy-2-oxopropyl)-GTP + H2O = lactate + GTP + H(+). It catalyses the reaction N(2)-(1-hydroxy-2-oxopropyl)-GDP + H2O = lactate + GDP + H(+). The catalysed reaction is N(2)-(1-hydroxy-2-oxopropyl)-GMP + H2O = lactate + GMP + H(+). The enzyme catalyses N(2)-(1-hydroxy-2-oxoethyl)-dGTP + H2O = dGTP + glycolate + H(+). It carries out the reaction N(2)-(1-hydroxy-2-oxoethyl)-GTP + H2O = glycolate + GTP + H(+). It catalyses the reaction N(2)-(1-hydroxy-2-oxoethyl)-GDP + H2O = glycolate + GDP + H(+). The catalysed reaction is N(2)-(1-hydroxy-2-oxoethyl)-GMP + H2O = glycolate + GMP + H(+). The enzyme catalyses an N(2)-(1-hydroxy-2-oxopropyl)-guanosine in RNA + H2O = a guanosine in RNA + lactate + H(+). It carries out the reaction an N(2)-(1-hydroxy-2-oxopropyl)-2'-deoxyguanosine in DNA + H2O = a 2'-deoxyguanosine in DNA + lactate + H(+). It catalyses the reaction an N(2)-(1-hydroxy-2-oxoethyl)-guanosine in RNA + H2O = a guanosine in RNA + glycolate + H(+). The catalysed reaction is an N(2)-(1-hydroxy-2-oxoethyl)-2'-deoxyguanosine in DNA + H2O = a 2'-deoxyguanosine in DNA + glycolate + H(+). Functionally, protein and nucleotide deglycase that catalyzes the deglycation of the Maillard adducts formed between amino groups of proteins or nucleotides and reactive carbonyl groups of glyoxals. Thus, functions as a protein deglycase that repairs methylglyoxal- and glyoxal-glycated proteins, and releases repaired proteins and lactate or glycolate, respectively. Deglycates cysteine, arginine and lysine residues in proteins, and thus reactivates these proteins by reversing glycation by glyoxals. Acts on early glycation intermediates (hemithioacetals and aminocarbinols), preventing the formation of Schiff bases and advanced glycation endproducts (AGE). Also functions as a nucleotide deglycase able to repair glycated guanine in the free nucleotide pool (GTP, GDP, GMP, dGTP) and in DNA and RNA. Is thus involved in a major nucleotide repair system named guanine glycation repair (GG repair), dedicated to reversing methylglyoxal and glyoxal damage via nucleotide sanitization and direct nucleic acid repair. Plays an important role in protecting cells from carbonyl stress. This is Protein/nucleic acid deglycase HchA from Escherichia coli O81 (strain ED1a).